The sequence spans 179 residues: Large ribosomal subunit protein uL6 (179 aa).

Belongs to the universal ribosomal protein uL6 family. In terms of assembly, part of the 50S ribosomal subunit.

Functionally, this protein binds to the 23S rRNA, and is important in its secondary structure. It is located near the subunit interface in the base of the L7/L12 stalk, and near the tRNA binding site of the peptidyltransferase center. This Clostridium perfringens (strain ATCC 13124 / DSM 756 / JCM 1290 / NCIMB 6125 / NCTC 8237 / Type A) protein is Large ribosomal subunit protein uL6.